The following is a 120-amino-acid chain: Large ribosomal subunit protein bL19 (120 aa).

This sequence belongs to the bacterial ribosomal protein bL19 family.

This protein is located at the 30S-50S ribosomal subunit interface and may play a role in the structure and function of the aminoacyl-tRNA binding site. The chain is Large ribosomal subunit protein bL19 from Chlorobium phaeobacteroides (strain DSM 266 / SMG 266 / 2430).